The following is a 652-amino-acid chain: Acetyl-coenzyme A synthetase (652 aa).

CoA-binding positions include 191 to 194 (RAGR), T311, and N335. ATP is bound by residues 387 to 389 (GEP), 411 to 416 (DTWWQT), D500, and R515. S523 contributes to the CoA binding site. ATP is bound at residue R526. The Mg(2+) site is built by V537, H539, and I542. R584 provides a ligand contact to CoA. An N6-acetyllysine; by autocatalysis modification is found at K609.

This sequence belongs to the ATP-dependent AMP-binding enzyme family. In terms of assembly, forms a 1:1 complex with CobB/NAD-dependent deacetylase. It depends on Mg(2+) as a cofactor. Post-translationally, autoacetylated. Deacetylation by CobB activates the enzyme.

It carries out the reaction acetate + ATP + CoA = acetyl-CoA + AMP + diphosphate. Functionally, catalyzes the conversion of acetate into acetyl-CoA (AcCoA), an essential intermediate at the junction of anabolic and catabolic pathways. Acs undergoes a two-step reaction. In the first half reaction, Acs combines acetate with ATP to form acetyl-adenylate (AcAMP) intermediate. In the second half reaction, it can then transfer the acetyl group from AcAMP to the sulfhydryl group of CoA, forming the product AcCoA. Its function is as follows. Enables the cell to use acetate during aerobic growth to generate energy via the TCA cycle, and biosynthetic compounds via the glyoxylate shunt. Acetylates CheY, the response regulator involved in flagellar movement and chemotaxis. The chain is Acetyl-coenzyme A synthetase from Escherichia coli (strain K12).